Here is a 24-residue protein sequence, read N- to C-terminus: Iron-regulated 31 kDa protein (24 aa).

It is found in the periplasm. Its function is as follows. May be involved in iron uptake. In Haemophilus influenzae, this protein is Iron-regulated 31 kDa protein.